Here is a 157-residue protein sequence, read N- to C-terminus: Protein-export protein SecB (157 aa).

This sequence belongs to the SecB family. Homotetramer, a dimer of dimers. One homotetramer interacts with 1 SecA dimer.

The protein resides in the cytoplasm. Its function is as follows. One of the proteins required for the normal export of preproteins out of the cell cytoplasm. It is a molecular chaperone that binds to a subset of precursor proteins, maintaining them in a translocation-competent state. It also specifically binds to its receptor SecA. This is Protein-export protein SecB from Dichelobacter nodosus (strain VCS1703A).